Here is a 457-residue protein sequence, read N- to C-terminus: Probable ECA polymerase (457 aa).

11 helical membrane-spanning segments follow: residues 3-23, 41-61, 65-85, 118-138, 154-174, 181-201, 206-226, 227-247, 340-360, 377-397, and 408-428; these read LLQF…ILTL, MLFL…VFGF, VVPA…YAIY, IMAL…GFLL, GVAL…VYFL, WLLF…IVGG, IIIA…ITLW, MLAL…LKRY, LVVM…GLII, YKAA…IVLA, and VVFF…LYWL.

Belongs to the WzyE family. In terms of assembly, probably part of a complex composed of WzxE, WzyE and WzzE.

Its subcellular location is the cell inner membrane. It functions in the pathway bacterial outer membrane biogenesis; enterobacterial common antigen biosynthesis. Probably involved in the polymerization of enterobacterial common antigen (ECA) trisaccharide repeat units. The chain is Probable ECA polymerase from Erwinia tasmaniensis (strain DSM 17950 / CFBP 7177 / CIP 109463 / NCPPB 4357 / Et1/99).